The chain runs to 1060 residues: Carbamoyl phosphate synthase large chain (1060 aa).

Positions 1-401 (MPKRTDIRKI…SLLKACRSLE (401 aa)) are carboxyphosphate synthetic domain. R129, R169, G175, G176, R208, I210, E215, G241, I242, H243, Q284, and E298 together coordinate ATP. The ATP-grasp 1 domain maps to 133 to 327 (KQLMEELNQP…IAKLAAKIAV (195 aa)). Mg(2+) contacts are provided by Q284, E298, and N300. Mn(2+) is bound by residues Q284, E298, and N300. The interval 402 to 546 (IGVDHIKIAD…YSTYAVENES (145 aa)) is oligomerization domain. Residues 547-929 (LISDKASILV…ALYKAFEAAY (383 aa)) are carbamoyl phosphate synthetic domain. The ATP-grasp 2 domain maps to 671-861 (EATLQALNIP…MAQVATKVIL (191 aa)). ATP-binding residues include R707, A746, L748, E752, G777, V778, H779, S780, Q820, and E832. Residues Q820, E832, and N834 each coordinate Mg(2+). Mn(2+) contacts are provided by Q820, E832, and N834. Residues 930 to 1060 (LHMPDYGNIV…SRAFTLKVLD (131 aa)) form the MGS-like domain. The allosteric domain stretch occupies residues 930–1060 (LHMPDYGNIV…SRAFTLKVLD (131 aa)).

Belongs to the CarB family. As to quaternary structure, composed of two chains; the small (or glutamine) chain promotes the hydrolysis of glutamine to ammonia, which is used by the large (or ammonia) chain to synthesize carbamoyl phosphate. Tetramer of heterodimers (alpha,beta)4. The cofactor is Mg(2+). Mn(2+) serves as cofactor.

The catalysed reaction is hydrogencarbonate + L-glutamine + 2 ATP + H2O = carbamoyl phosphate + L-glutamate + 2 ADP + phosphate + 2 H(+). It catalyses the reaction hydrogencarbonate + NH4(+) + 2 ATP = carbamoyl phosphate + 2 ADP + phosphate + 2 H(+). It participates in amino-acid biosynthesis; L-arginine biosynthesis; carbamoyl phosphate from bicarbonate: step 1/1. Its pathway is pyrimidine metabolism; UMP biosynthesis via de novo pathway; (S)-dihydroorotate from bicarbonate: step 1/3. Large subunit of the glutamine-dependent carbamoyl phosphate synthetase (CPSase). CPSase catalyzes the formation of carbamoyl phosphate from the ammonia moiety of glutamine, carbonate, and phosphate donated by ATP, constituting the first step of 2 biosynthetic pathways, one leading to arginine and/or urea and the other to pyrimidine nucleotides. The large subunit (synthetase) binds the substrates ammonia (free or transferred from glutamine from the small subunit), hydrogencarbonate and ATP and carries out an ATP-coupled ligase reaction, activating hydrogencarbonate by forming carboxy phosphate which reacts with ammonia to form carbamoyl phosphate. The sequence is that of Carbamoyl phosphate synthase large chain from Streptococcus agalactiae serotype III (strain NEM316).